Reading from the N-terminus, the 187-residue chain is MNNDEVKPQHLYLTGYRGCGKSTLAKLLAQKLSLPSVDLDDVIETTAGKSIAEIFANETEVGFRDREEAALMEVSRRPQHVIALGGGTILREANRNIIANSGWCVWLDAEPDVLVARLAGDATTADRRPSLTDQSVFDEVQSVMSHREPLYRASADLRIDTSHRNMDEILTEVLKAAPSSIGQADLS.

18-23 (GCGKST) is a binding site for ATP. S22 contributes to the Mg(2+) binding site. Substrate is bound by residues D40, R64, and G86. R128 contacts ATP. Residue R147 participates in substrate binding. ATP is bound at residue R164.

Belongs to the shikimate kinase family. Monomer. The cofactor is Mg(2+).

It is found in the cytoplasm. It carries out the reaction shikimate + ATP = 3-phosphoshikimate + ADP + H(+). It participates in metabolic intermediate biosynthesis; chorismate biosynthesis; chorismate from D-erythrose 4-phosphate and phosphoenolpyruvate: step 5/7. In terms of biological role, catalyzes the specific phosphorylation of the 3-hydroxyl group of shikimic acid using ATP as a cosubstrate. This is Shikimate kinase from Rhodopirellula baltica (strain DSM 10527 / NCIMB 13988 / SH1).